The following is a 136-amino-acid chain: uncharacterized protein (136 aa).

This is an uncharacterized protein from Ictaluridae (bullhead catfishes).